The primary structure comprises 55 residues: Large ribosomal subunit protein bL33 (55 aa).

Belongs to the bacterial ribosomal protein bL33 family.

The chain is Large ribosomal subunit protein bL33 from Methylorubrum extorquens (strain CM4 / NCIMB 13688) (Methylobacterium extorquens).